Here is a 156-residue protein sequence, read N- to C-terminus: Transcription elongation factor GreA (156 aa).

Residues 8–75 adopt a coiled-coil conformation; it reads LTKEGYEKLK…ELENMLSKAE (68 aa).

It belongs to the GreA/GreB family.

Its function is as follows. Necessary for efficient RNA polymerase transcription elongation past template-encoded arresting sites. The arresting sites in DNA have the property of trapping a certain fraction of elongating RNA polymerases that pass through, resulting in locked ternary complexes. Cleavage of the nascent transcript by cleavage factors such as GreA or GreB allows the resumption of elongation from the new 3'terminus. GreA releases sequences of 2 to 3 nucleotides. The protein is Transcription elongation factor GreA of Thermosipho melanesiensis (strain DSM 12029 / CIP 104789 / BI429).